A 486-amino-acid polypeptide reads, in one-letter code: Pentatricopeptide repeat-containing protein At3g06430, chloroplastic (486 aa).

Residues 1–36 (MASMSLSFSSSLCSSRIPEGKRRFRHRDVGIVRCVL) constitute a chloroplast transit peptide. 10 PPR repeats span residues 123–157 (KEGTYMKLLVLLGKSGQPNRAQKLFDEMLEEGLEP), 158–188 (TVELYTALLAAYTRSNLIDDAFSILDKMKSF), 194–228 (DVFTYSTLLKACVDASQFDLVDSLYKEMDERLITP), 229–264 (NTVTQNIVLSGYGRVGRFDQMEKVLSDMLVSTACKP), 265–299 (DVWTMNIILSVFGNMGKIDMMESWYEKFRNFGIEP), 300–334 (ETRTFNILIGSYGKKRMYDKMSSVMEYMRKLEFPW), 335–369 (TTSTYNNIIEAFADVGDAKNMELTFDQMRSEGMKA), 370–404 (DTKTFCCLINGYANAGLFHKVISSVQLAAKFEIPE), 405–439 (NTAFYNAVISACAKADDLIEMERVYIRMKERQCVC), and 440–470 (DSRTFEIMVEAYEKEGMNDKIYYLEQERQKL).

The protein belongs to the PPR family. P subfamily.

It localises to the plastid. The protein localises to the chloroplast. This is Pentatricopeptide repeat-containing protein At3g06430, chloroplastic (EMB2750) from Arabidopsis thaliana (Mouse-ear cress).